The primary structure comprises 210 residues: MPKGLLGKKVGMTQIFTDTGLAVPVTVIEAGPCIVVQKKTPEKDGYSAIQLGFGAKKERSFNKPMLGHFLAARVRPLRYLREVRVENPETYQVGQEIKADIFAPGEKVDVVGTTKGRGFAGGIKRHGFHRGPMAHGSKYHRRPGSLGAKGPARVFKGRRLPGHLGMERVTVQNLEVVKVDADRNLLAVKGAVPGPKGGLVLIKQAAKARG.

The disordered stretch occupies residues 121-150 (GGIKRHGFHRGPMAHGSKYHRRPGSLGAKG).

It belongs to the universal ribosomal protein uL3 family. As to quaternary structure, part of the 50S ribosomal subunit. Forms a cluster with proteins L14 and L19.

In terms of biological role, one of the primary rRNA binding proteins, it binds directly near the 3'-end of the 23S rRNA, where it nucleates assembly of the 50S subunit. The chain is Large ribosomal subunit protein uL3 from Pelotomaculum thermopropionicum (strain DSM 13744 / JCM 10971 / SI).